Consider the following 246-residue polypeptide: uncharacterized protein (246 aa).

This is an uncharacterized protein from Acidianus sp. F28 (AFV-2).